Here is a 1046-residue protein sequence, read N- to C-terminus: SWI/SNF-related matrix-associated actin-dependent regulator of chromatin subfamily A member 1 (1046 aa).

Residues 27–61 form a disordered region; it reads EQPGPSTFKEEGAAAAATEGTTATEKGEKKEKITS. Positions 39–50 are enriched in low complexity; sequence AAAAATEGTTAT. 2 positions are modified to phosphoserine: S120 and S123. The Helicase ATP-binding domain occupies 199-364; sequence ISLYENGVNG…WALLNFLLPD (166 aa). 212–219 lines the ATP pocket; sequence DEMGLGKT. Positions 315–318 match the DEAH box motif; that stretch reads DEAH. The 152-residue stretch at 494–645 folds into the Helicase C-terminal domain; the sequence is ALDKLLARIK…SIVIQQGRLI (152 aa). Residues K654, K720, and K742 each participate in a glycyl lysine isopeptide (Lys-Gly) (interchain with G-Cter in SUMO2) cross-link. Positions 819 to 840 are disordered; sequence AQREEQKKIDGAEPLTPQETEE. A compositionally biased stretch (basic and acidic residues) spans 820–829; the sequence is QREEQKKIDG. Positions 847–899 constitute an SANT 1 domain; sequence QGFTNWTKRDFNQFIKANEKYGRDDIDNIAREVEGKSPEEVMEYSAVFWERCN. Position 946 is a phosphotyrosine (Y946). In terms of domain architecture, SANT 2 spans 950-1014; it reads KGKNYTEEED…QRRCNTLISL (65 aa). Residues 1003–1037 are a coiled coil; it reads EFQRRCNTLISLIEKENMEIEERERAEKKKRATKT. The segment at 1025 to 1046 is disordered; the sequence is RERAEKKKRATKTPMVKFSAFS.

This sequence belongs to the SNF2/RAD54 helicase family. ISWI subfamily. May form homodimers. Component of the ACF-1 ISWI chromatin remodeling complex at least composed of SMARCA1 and BAZ1A, which regulates the spacing of histone octamers on the DNA template to facilitate access to DNA. Within the complex interacts with BAZ1A; the interaction is direct. Component of the WICH-1 ISWI chromatin remodeling complex at least composed of SMARCA1 and BAZ1B/WSTF. Within the complex interacts with BAZ1B/WSTF. Component of the NoRC-1 ISWI chromatin remodeling complex at least composed of SMARCA1 and BAZ2A/TIP5. Within the complex interacts with BAZ2A/TIP5. Component of the BRF-1 ISWI chromatin remodeling complex at least composed of SMARCA1 and BAZ2B. Within the complex interacts with BAZ2B. Component of the NURF-1 ISWI chromatin remodeling complex (also called the nucleosome-remodeling factor (NURF) complex) at least composed of SMARCA1, BPTF, RBBP4 and RBBP7. Within the complex interacts with BPTF. Within the complex interacts with RBBP4 and RBBP7. Component of the CERF-1 ISWI chromatin remodeling complex (also called the CECR2-containing-remodeling factor (CERF) complex) at least composed of CECR2 and SMARCA1. LUZP1 is detected as part of the CERF-1 complex in embryonic stem cells where it is involved in complex stabilization but is not detected in the complex in the testis. Component of the RSF-1 ISWI chromatin remodeling complex at least composed of SMARCA1 and RSF1. Within the complex interacts with RSF1. Interacts with PRLR. Interacts with ERCC6. As to expression, predominantly expressed in cortex, cerebellum, ovaries, testes, uterus and placenta.

Its subcellular location is the nucleus. The catalysed reaction is ATP + H2O = ADP + phosphate + H(+). In terms of biological role, ATPase that possesses intrinsic ATP-dependent chromatin-remodeling activity. ATPase activity is substrate-dependent, and is increased when nucleosomes are the substrate, but is also catalytically active when DNA alone is the substrate. Catalytic subunit of ISWI chromatin-remodeling complexes, which form ordered nucleosome arrays on chromatin and facilitate access to DNA during DNA-templated processes such as DNA replication, transcription, and repair. Within the ISWI chromatin-remodeling complexes, slides edge- and center-positioned histone octamers away from their original location on the DNA template. Catalytic activity and histone octamer sliding propensity is regulated and determined by components of the ISWI chromatin-remodeling complexes. The BAZ1A-, BAZ1B-, BAZ2A- and BAZ2B-containing ISWI chromatin-remodeling complexes regulate the spacing of nucleosomes along the chromatin and have the ability to slide mononucleosomes to the center of a DNA template. The CECR2- and RSF1-containing ISWI chromatin-remodeling complexes do not have the ability to slide mononucleosomes to the center of a DNA template. Within the NURF-1 and CERF-1 ISWI chromatin remodeling complexes, nucleosomes are the preferred substrate for its ATPase activity. Within the NURF-1 ISWI chromatin-remodeling complex, binds to the promoters of En1 and En2 to positively regulate their expression and promote brain development. May promote neurite outgrowth. May be involved in the development of luteal cells. Facilitates nucleosome assembly during DNA replication, ensuring replication fork progression and genomic stability by preventing replication stress and nascent DNA gaps. The chain is SWI/SNF-related matrix-associated actin-dependent regulator of chromatin subfamily A member 1 (Smarca1) from Mus musculus (Mouse).